Consider the following 1523-residue polypeptide: ATP-binding cassette sub-family C member 3 (1523 aa).

At methionine 1–serine 35 the chain is on the extracellular side. N-linked (GlcNAc...) asparagine glycosylation is present at asparagine 18. A helical membrane pass occupies residues leucine 36–leucine 56. Over arginine 57–alanine 75 the chain is Cytoplasmic. A helical membrane pass occupies residues leucine 76 to isoleucine 96. Residues histidine 97–alanine 102 lie on the Extracellular side of the membrane. A helical transmembrane segment spans residues proline 103 to isoleucine 123. Residues glutamine 124–arginine 129 lie on the Cytoplasmic side of the membrane. A helical membrane pass occupies residues glycine 130–isoleucine 150. Residues proline 151–arginine 170 lie on the Extracellular side of the membrane. A helical membrane pass occupies residues phenylalanine 171 to lysine 191. At glutamate 192–alanine 301 the chain is on the cytoplasmic side. The chain crosses the membrane as a helical span at residues leucine 302–glycine 324. Residues leucine 310–glutamine 593 form the ABC transmembrane type-1 1 domain. The Extracellular segment spans residues phenylalanine 325–threonine 345. Residues tryptophan 346 to leucine 366 traverse the membrane as a helical segment. Over histidine 367–phenylalanine 419 the chain is Cytoplasmic. A helical membrane pass occupies residues methionine 420–isoleucine 440. Residue tyrosine 441 is a topological domain, extracellular. The chain crosses the membrane as a helical span at residues phenylalanine 442–isoleucine 462. Residues proline 463–threonine 535 lie on the Cytoplasmic side of the membrane. A helical membrane pass occupies residues phenylalanine 536–valine 556. Topologically, residues aspartate 557 to alanine 567 are extracellular. A helical membrane pass occupies residues phenylalanine 568 to isoleucine 588. Topologically, residues serine 589 to threonine 967 are cytoplasmic. Residues isoleucine 626–asparagine 850 enclose the ABC transporter 1 domain. Glycine 660–serine 667 is an ATP binding site. Residues serine 903 and serine 906 each carry the phosphoserine modification. The segment covering serine 903–threonine 915 has biased composition (polar residues). Residues serine 903–serine 923 are disordered. The 282-residue stretch at threonine 967–serine 1248 folds into the ABC transmembrane type-1 2 domain. A helical membrane pass occupies residues leucine 968–leucine 988. At serine 989 to alanine 1013 the chain is on the extracellular side. Asparagine 1002 carries N-linked (GlcNAc...) asparagine glycosylation. The helical transmembrane segment at leucine 1014–isoleucine 1034 threads the bilayer. Topologically, residues glutamine 1035–aspartate 1071 are cytoplasmic. Residues isoleucine 1072–threonine 1092 form a helical membrane-spanning segment. Residues serine 1093 to threonine 1096 are Extracellular-facing. The helical transmembrane segment at isoleucine 1097–leucine 1117 threads the bilayer. The Cytoplasmic portion of the chain corresponds to tyrosine 1118 to leucine 1191. Residues glycine 1192–isoleucine 1212 form a helical membrane-spanning segment. Residues glycine 1213–proline 1219 lie on the Extracellular side of the membrane. A helical transmembrane segment spans residues glycine 1220–isoleucine 1240. At arginine 1241–alanine 1523 the chain is on the cytoplasmic side. The ABC transporter 2 domain maps to phenylalanine 1287–aspartate 1519. Glycine 1319–serine 1326 lines the ATP pocket.

This sequence belongs to the ABC transporter superfamily. ABCC family. Conjugate transporter (TC 3.A.1.208) subfamily. In terms of tissue distribution, detected throughout the gastrointestinal tract, liver, lung, pancreas, bladder, gall bladder and at low levels in the adrenal gland.

It is found in the basolateral cell membrane. The protein localises to the basal cell membrane. The catalysed reaction is an S-substituted glutathione(in) + ATP + H2O = an S-substituted glutathione(out) + ADP + phosphate + H(+). It catalyses the reaction ATP + H2O + xenobioticSide 1 = ADP + phosphate + xenobioticSide 2.. The enzyme catalyses 17beta-estradiol 17-O-(beta-D-glucuronate)(in) + ATP + H2O = 17beta-estradiol 17-O-(beta-D-glucuronate)(out) + ADP + phosphate + H(+). It carries out the reaction dehydroepiandrosterone 3-sulfate(in) + ATP + H2O = dehydroepiandrosterone 3-sulfate(out) + ADP + phosphate + H(+). The catalysed reaction is leukotriene C4(in) + ATP + H2O = leukotriene C4(out) + ADP + phosphate + H(+). It catalyses the reaction taurocholate(in) + ATP + H2O = taurocholate(out) + ADP + phosphate + H(+). The enzyme catalyses glycocholate(in) + ATP + H2O = glycocholate(out) + ADP + phosphate + H(+). It carries out the reaction taurolithocholate 3-sulfate(in) + ATP + H2O = taurolithocholate 3-sulfate(out) + ADP + phosphate + H(+). The catalysed reaction is taurochenodeoxycholate 3-sulfate(in) + ATP + H2O = taurochenodeoxycholate 3-sulfate(out) + ADP + phosphate + H(+). It catalyses the reaction (4Z,15Z)-bilirubin IXalpha C8-beta-D-glucuronoside(in) + ATP + H2O = (4Z,15Z)-bilirubin IXalpha C8-beta-D-glucuronoside(out) + ADP + phosphate + H(+). The enzyme catalyses (4Z,15Z)-bilirubin IXalpha C8,C12-beta-D-bisglucuronoside(in) + ATP + H2O = (4Z,15Z)-bilirubin IXalpha C8,C12-beta-D-bisglucuronoside(out) + ADP + phosphate + H(+). Its function is as follows. ATP-dependent transporter of the ATP-binding cassette (ABC) family that binds and hydrolyzes ATP to enable active transport of various substrates including many drugs, toxicants and endogenous compound across cell membranes. Transports glucuronide conjugates such as bilirubin diglucuronide, estradiol-17-beta-o-glucuronide and GSH conjugates such as leukotriene C4 (LTC4). Transports also various bile salts (taurocholate, glycocholate, taurochenodeoxycholate-3-sulfate, taurolithocholate- 3-sulfate). Does not contribute substantially to bile salt physiology but provides an alternative route for the export of bile acids and glucuronides from cholestatic hepatocytes. May contribute to regulate the transport of organic compounds in testes across the blood-testis-barrier. The chain is ATP-binding cassette sub-family C member 3 (Abcc3) from Mus musculus (Mouse).